The sequence spans 573 residues: Protein FAM227B (573 aa).

Residues 429–485 (DNKKDFKRVKQRIKDDIKFLKEQQEQIDKELDRLQAKASKNLQEVKNDFENFLHKLR) are a coiled coil. The span at 497 to 521 (SASPSESLQSLQSPNSSLSSPAMSE) shows a compositional bias: low complexity. Residues 497–528 (SASPSESLQSLQSPNSSLSSPAMSEDFNSVEE) are disordered.

This sequence belongs to the FAM227 family.

The polypeptide is Protein FAM227B (Fam227b) (Rattus norvegicus (Rat)).